Here is a 272-residue protein sequence, read N- to C-terminus: Phosphoglycolate phosphatase (272 aa).

Residue aspartate 19 is the Nucleophile of the active site. Positions 19, 21, and 182 each coordinate Mg(2+).

This sequence belongs to the HAD-like hydrolase superfamily. CbbY/CbbZ/Gph/YieH family. Mg(2+) is required as a cofactor.

It carries out the reaction 2-phosphoglycolate + H2O = glycolate + phosphate. It participates in organic acid metabolism; glycolate biosynthesis; glycolate from 2-phosphoglycolate: step 1/1. Functionally, specifically catalyzes the dephosphorylation of 2-phosphoglycolate. Is involved in the dissimilation of the intracellular 2-phosphoglycolate formed during the DNA repair of 3'-phosphoglycolate ends, a major class of DNA lesions induced by oxidative stress. The polypeptide is Phosphoglycolate phosphatase (Pseudomonas syringae pv. tomato (strain ATCC BAA-871 / DC3000)).